The primary structure comprises 429 residues: Histidine--tRNA ligase (429 aa).

It belongs to the class-II aminoacyl-tRNA synthetase family. As to quaternary structure, homodimer.

It localises to the cytoplasm. The catalysed reaction is tRNA(His) + L-histidine + ATP = L-histidyl-tRNA(His) + AMP + diphosphate + H(+). This is Histidine--tRNA ligase from Alkalilimnicola ehrlichii (strain ATCC BAA-1101 / DSM 17681 / MLHE-1).